Here is a 1755-residue protein sequence, read N- to C-terminus: Transposon Ty1-DR1 Gag-Pol polyprotein (1755 aa).

3 stretches are compositionally biased toward polar residues: residues 1-10 (MESQQLSNYP), 48-60 (TKAN…TPAS), and 127-152 (QSQF…GNTF). Disordered regions lie at residues 1-93 (MESQ…MMTQ), 126-173 (PQSQ…RPPP), and 352-421 (GSRN…SKST). A compositionally biased stretch (low complexity) spans 153–165 (TDSSSADSDMTST). Residues 299-401 (NNGIHINNKV…NSKSKTARAH (103 aa)) are RNA-binding. Residues 402–418 (NVSTSNNSPSTDNDSIS) show a composition bias toward low complexity. Residue S416 is modified to Phosphoserine. The active-site For protease activity; shared with dimeric partner is D461. Positions 583–640 (NVHTSESTRKYPYPFIHRMLAHANAQTIRYSLKNNTITYFNESDVDWSSAIDYQCPDC) are integrase-type zinc finger-like. An Integrase catalytic domain is found at 660-835 (NSYEPFQYLH…AGLDISTLLP (176 aa)). Mg(2+)-binding residues include D671 and D736. Disordered regions lie at residues 956–1087 (SKAV…ETEK), 1092–1111 (RSPS…NIVP), and 1130–1187 (DLPL…DNET). Low complexity predominate over residues 960-969 (SPTDSTPPST). Residues 1005–1015 (STPQISNIEST) show a composition bias toward polar residues. Residues 1038–1053 (ESSHASKSKDFRHSDS) are compositionally biased toward basic and acidic residues. Polar residues-rich tracts occupy residues 1054 to 1082 (YSEN…QISD) and 1101 to 1111 (PENNSSHNIVP). The short motif at 1178–1212 (KKRSLEDNETEIKVSRDTWNTKNMRSLEPPRSKKR) is the Bipartite nuclear localization signal element. The Reverse transcriptase Ty1/copia-type domain occupies 1338-1476 (NNYYITQLDI…DILGLEIKYQ (139 aa)). The Mg(2+) site is built by D1346, D1427, D1428, D1610, E1652, and D1685. The RNase H Ty1/copia-type domain maps to 1610–1752 (DASYGNQPYY…IKTFKLLTNK (143 aa)).

The capsid protein forms a homotrimer, from which the VLPs are assembled. The protease is a homodimer, whose active site consists of two apposed aspartic acid residues. In terms of processing, initially, virus-like particles (VLPs) are composed of the structural unprocessed proteins Gag and Gag-Pol, and also contain the host initiator methionine tRNA (tRNA(i)-Met) which serves as a primer for minus-strand DNA synthesis, and a dimer of genomic Ty RNA. Processing of the polyproteins occurs within the particle and proceeds by an ordered pathway, called maturation. First, the protease (PR) is released by autocatalytic cleavage of the Gag-Pol polyprotein yielding capsid protein p45 and a Pol-p154 precursor protein. This cleavage is a prerequisite for subsequent processing of Pol-p154 at the remaining sites to release the mature structural and catalytic proteins. Maturation takes place prior to the RT reaction and is required to produce transposition-competent VLPs.

The protein localises to the cytoplasm. Its subcellular location is the nucleus. It catalyses the reaction DNA(n) + a 2'-deoxyribonucleoside 5'-triphosphate = DNA(n+1) + diphosphate. The catalysed reaction is Endonucleolytic cleavage to 5'-phosphomonoester.. Its function is as follows. Capsid protein (CA) is the structural component of the virus-like particle (VLP), forming the shell that encapsulates the retrotransposons dimeric RNA genome. The particles are assembled from trimer-clustered units and there are holes in the capsid shells that allow for the diffusion of macromolecules. CA also has nucleocapsid-like chaperone activity, promoting primer tRNA(i)-Met annealing to the multipartite primer-binding site (PBS), dimerization of Ty1 RNA and initiation of reverse transcription. Functionally, the aspartyl protease (PR) mediates the proteolytic cleavages of the Gag and Gag-Pol polyproteins after assembly of the VLP. Reverse transcriptase/ribonuclease H (RT) is a multifunctional enzyme that catalyzes the conversion of the retro-elements RNA genome into dsDNA within the VLP. The enzyme displays a DNA polymerase activity that can copy either DNA or RNA templates, and a ribonuclease H (RNase H) activity that cleaves the RNA strand of RNA-DNA heteroduplexes during plus-strand synthesis and hydrolyzes RNA primers. The conversion leads to a linear dsDNA copy of the retrotransposon that includes long terminal repeats (LTRs) at both ends. In terms of biological role, integrase (IN) targets the VLP to the nucleus, where a subparticle preintegration complex (PIC) containing at least integrase and the newly synthesized dsDNA copy of the retrotransposon must transit the nuclear membrane. Once in the nucleus, integrase performs the integration of the dsDNA into the host genome. This is Transposon Ty1-DR1 Gag-Pol polyprotein (TY1B-DR1) from Saccharomyces cerevisiae (strain ATCC 204508 / S288c) (Baker's yeast).